The following is a 456-amino-acid chain: UDP-N-acetylmuramoylalanine--D-glutamate ligase (456 aa).

Residue glycine 113–threonine 119 participates in ATP binding.

It belongs to the MurCDEF family.

The protein resides in the cytoplasm. The enzyme catalyses UDP-N-acetyl-alpha-D-muramoyl-L-alanine + D-glutamate + ATP = UDP-N-acetyl-alpha-D-muramoyl-L-alanyl-D-glutamate + ADP + phosphate + H(+). It participates in cell wall biogenesis; peptidoglycan biosynthesis. Functionally, cell wall formation. Catalyzes the addition of glutamate to the nucleotide precursor UDP-N-acetylmuramoyl-L-alanine (UMA). The protein is UDP-N-acetylmuramoylalanine--D-glutamate ligase of Rippkaea orientalis (strain PCC 8801 / RF-1) (Cyanothece sp. (strain PCC 8801)).